The chain runs to 638 residues: Ubiquitin-like-specific protease 2 (638 aa).

Positions 1 to 12 (MRDSKDALDDKS) are enriched in basic and acidic residues. 2 disordered regions span residues 1–79 (MRDS…PKHL) and 238–314 (PQKT…TSND). Polar residues predominate over residues 238–249 (PQKTVRSIVKQT). Over residues 250–264 (SSPHSSKMPKHSLPS) the composition is skewed to low complexity. The segment covering 267-314 (TPFNSNSGDSLLSRIKNSNQSSSERPTANNGAQEQNQSSSSAGNTSND) has biased composition (polar residues). Active-site residues include His440 and Asp494. Thr526 is subject to Phosphothreonine. Cys544 is an active-site residue. Polar residues predominate over residues 610–619 (NERQSLSSGS). The interval 610-638 (NERQSLSSGSNDEEDKENDDDLAILPITN) is disordered. Residues 620–631 (NDEEDKENDDDL) are compositionally biased toward acidic residues.

This sequence belongs to the peptidase C48 family.

Its subcellular location is the nucleus. This chain is Ubiquitin-like-specific protease 2 (ulp2), found in Schizosaccharomyces pombe (strain 972 / ATCC 24843) (Fission yeast).